The chain runs to 245 residues: Adenosine 5'-phosphosulfate reductase (245 aa).

The [4Fe-4S] cluster site is built by C124, C125, C205, and C208. The active-site Nucleophile; cysteine thiosulfonate intermediate is the C231.

The protein belongs to the PAPS reductase family. CysH subfamily. [4Fe-4S] cluster serves as cofactor.

The protein resides in the cytoplasm. The enzyme catalyses [thioredoxin]-disulfide + sulfite + AMP + 2 H(+) = adenosine 5'-phosphosulfate + [thioredoxin]-dithiol. It functions in the pathway sulfur metabolism; hydrogen sulfide biosynthesis; sulfite from sulfate. In terms of biological role, catalyzes the formation of sulfite from adenosine 5'-phosphosulfate (APS) using thioredoxin as an electron donor. This chain is Adenosine 5'-phosphosulfate reductase, found in Chelativorans sp. (strain BNC1).